Reading from the N-terminus, the 706-residue chain is Probable protein S-acyltransferase 20 (706 aa).

Transmembrane regions (helical) follow at residues 16 to 36 (VIAI…FAPF) and 41 to 61 (IWEY…FVLY). A DHHC domain is found at 172–222 (LFCTLCNCEVRKFSKHCRSCDKCVDCFDHHCKWLNNCVGRKNYVTFVSLMS). Cys-202 functions as the S-palmitoyl cysteine intermediate in the catalytic mechanism. The next 2 membrane-spanning stretches (helical) occupy residues 220–240 (LMSA…AVIV) and 275–295 (AVAI…MLLI). Disordered regions lie at residues 470-505 (SSLS…HVHE), 591-621 (LNPS…ALRD), and 680-706 (RDST…SNIK). Polar residues-rich tracts occupy residues 492–501 (HGMSNLSSPS), 591–603 (LNPS…TQNP), and 697–706 (ANSQTGSNIK).

This sequence belongs to the DHHC palmitoyltransferase family.

It is found in the cell membrane. It localises to the cytoplasmic vesicle membrane. The catalysed reaction is L-cysteinyl-[protein] + hexadecanoyl-CoA = S-hexadecanoyl-L-cysteinyl-[protein] + CoA. In terms of biological role, palmitoyl acyltransferase. This is Probable protein S-acyltransferase 20 (PAT20) from Arabidopsis thaliana (Mouse-ear cress).